The following is a 217-amino-acid chain: Adenylate kinase (217 aa).

An ATP-binding site is contributed by 10–15 (GAGKGT). Residues 30-59 (STGDMLRAAVKAGTEMGLAAKKVMDAGGLV) are NMP. AMP is bound by residues threonine 31, arginine 36, 57-59 (GLV), 85-88 (GFPR), and glutamine 92. The interval 122 to 159 (GRRSHPASGRTYHVKFNPPKVDGVDDVTGEPLVQRDDD) is LID. Residues arginine 123 and 132–133 (TY) contribute to the ATP site. Positions 156 and 167 each coordinate AMP. Glycine 203 lines the ATP pocket.

It belongs to the adenylate kinase family. As to quaternary structure, monomer.

The protein resides in the cytoplasm. The enzyme catalyses AMP + ATP = 2 ADP. The protein operates within purine metabolism; AMP biosynthesis via salvage pathway; AMP from ADP: step 1/1. Its function is as follows. Catalyzes the reversible transfer of the terminal phosphate group between ATP and AMP. Plays an important role in cellular energy homeostasis and in adenine nucleotide metabolism. The sequence is that of Adenylate kinase from Leptothrix cholodnii (strain ATCC 51168 / LMG 8142 / SP-6) (Leptothrix discophora (strain SP-6)).